The following is a 299-amino-acid chain: Recombination-associated protein RdgC (299 aa).

This sequence belongs to the RdgC family.

It localises to the cytoplasm. The protein localises to the nucleoid. In terms of biological role, may be involved in recombination. This is Recombination-associated protein RdgC from Cupriavidus necator (strain ATCC 17699 / DSM 428 / KCTC 22496 / NCIMB 10442 / H16 / Stanier 337) (Ralstonia eutropha).